The primary structure comprises 563 residues: Endogenous retroviral envelope protein HEMO (563 aa).

Residues 1–26 form the signal peptide; sequence MGSLSNYALLQLTLTAFLTILVQPQH. At 27–488 the chain is on the extracellular side; sequence LLAPVFRTLS…IFAKVGDWFR (462 aa). N122 and N192 each carry an N-linked (GlcNAc...) asparagine glycan. Residues 489-509 form a helical membrane-spanning segment; that stretch reads SWGYVLLIVLFCLFIFVLIYV. Topologically, residues 510–563 are cytoplasmic; sequence RVFRKSRRSLNSQPLNLALSPQQSAQLLVSETSCQVSNRAMKGLTTHQYDTSLL.

It belongs to the gamma type-C retroviral envelope protein family. In terms of processing, N-glycosylated. Post-translationally, cleaved by some metalloproteinase at 432-Gln-Arg-433 (mainly) or 433-Arg-Gln-434, leading to release the secreted form (Endogenous retroviral envelope protein HEMO, secreted form) in the extracellular medium. Expressed at high level in the placenta and stem cells (at protein level). Also expressed in the kidney but at a lower level. Endogenous retroviral envelope protein HEMO, secreted form: Present in the blood of pregnant women (at protein level).

It is found in the cell membrane. It localises to the secreted. Its function is as follows. Endogenous envelope proteins originate from retroviral envelope proteins, which mediate receptor recognition and membrane fusion during early infection. Endogenous envelope proteins may have kept, lost or modified their original function during evolution. The sequence is that of Endogenous retroviral envelope protein HEMO from Homo sapiens (Human).